The sequence spans 509 residues: Bifunctional pantoate ligase/cytidylate kinase (509 aa).

The segment at 1–275 (MKKLIIRKTE…CGETRLIDHV (275 aa)) is pantoate--beta-alanine ligase. 29–36 (MGNLHDGH) contributes to the ATP binding site. His36 acts as the Proton donor in catalysis. A (R)-pantoate-binding site is contributed by Gln61. Gln61 provides a ligand contact to beta-alanine. Residue 149–152 (GEKD) participates in ATP binding. Gln155 is a (R)-pantoate binding site. An ATP-binding site is contributed by 186 to 189 (LSSR). The tract at residues 276-509 (FLMKRRPIIA…DKIPKESEIK (234 aa)) is cytidylate kinase.

It in the N-terminal section; belongs to the pantothenate synthetase family. This sequence in the C-terminal section; belongs to the cytidylate kinase family. Type 1 subfamily.

The protein localises to the cytoplasm. It carries out the reaction (R)-pantoate + beta-alanine + ATP = (R)-pantothenate + AMP + diphosphate + H(+). It catalyses the reaction CMP + ATP = CDP + ADP. The enzyme catalyses dCMP + ATP = dCDP + ADP. Its pathway is cofactor biosynthesis; (R)-pantothenate biosynthesis; (R)-pantothenate from (R)-pantoate and beta-alanine: step 1/1. Catalyzes the condensation of pantoate with beta-alanine in an ATP-dependent reaction via a pantoyl-adenylate intermediate. Its function is as follows. Catalyzes the transfer of a phosphate group from ATP to either CMP or dCMP to form CDP or dCDP and ADP, respectively. This is Bifunctional pantoate ligase/cytidylate kinase from Prochlorococcus marinus (strain AS9601).